A 258-amino-acid polypeptide reads, in one-letter code: Regulatory protein RecX (258 aa).

The protein belongs to the RecX family.

It localises to the cytoplasm. Its function is as follows. Modulates RecA activity. In Streptococcus pyogenes serotype M5 (strain Manfredo), this protein is Regulatory protein RecX.